Reading from the N-terminus, the 320-residue chain is Nicotianamine synthase 2 (320 aa).

It belongs to the nicotianamine synthase (NAS)-like family.

The enzyme catalyses 3 S-adenosyl-L-methionine = nicotianamine + 3 S-methyl-5'-thioadenosine + 3 H(+). Its function is as follows. Synthesizes nicotianamine, a polyamine which serves as a sensor for the physiological iron status within the plant, and/or might be involved in the transport of iron. The protein is Nicotianamine synthase 2 (NAS2) of Arabidopsis thaliana (Mouse-ear cress).